Here is a 592-residue protein sequence, read N- to C-terminus: Putative phosphatidylinositol 4-kinase alpha-like protein P2 (592 aa).

Residues 180–318 (EQLVEENTGS…ISWQAAIFKL (139 aa)) are pleckstrin homology (PH) domain conferring phosphoinositide binding specificity. The PI3K/PI4K catalytic domain occupies 275-576 (KVKRCGVSEL…VIQSCFLSNR (302 aa)). Positions 281–287 (VSELEKE) are G-loop. The interval 441–449 (QIKDRHNGN) is catalytic loop. The interval 460–484 (HIDFGFMFESSPGGNLGWEPDIKLT) is activation loop.

It belongs to the PI3/PI4-kinase family. Type III PI4K subfamily.

The protein is Putative phosphatidylinositol 4-kinase alpha-like protein P2 (PI4KAP2) of Homo sapiens (Human).